The primary structure comprises 327 residues: Phenylalanine--tRNA ligase alpha subunit (327 aa).

Glu-252 is a Mg(2+) binding site.

This sequence belongs to the class-II aminoacyl-tRNA synthetase family. Phe-tRNA synthetase alpha subunit type 1 subfamily. Tetramer of two alpha and two beta subunits. Mg(2+) is required as a cofactor.

Its subcellular location is the cytoplasm. It carries out the reaction tRNA(Phe) + L-phenylalanine + ATP = L-phenylalanyl-tRNA(Phe) + AMP + diphosphate + H(+). The protein is Phenylalanine--tRNA ligase alpha subunit of Salmonella agona (strain SL483).